The primary structure comprises 335 residues: Ketol-acid reductoisomerase (NAD(P)(+)) (335 aa).

One can recognise a KARI N-terminal Rossmann domain in the interval 2–182 (AKIYKDEDIS…GCARAGVIES (181 aa)). NADP(+) is bound by residues 25–28 (YGSQ), R49, S53, and 83–86 (DMVQ). Residue H108 is part of the active site. An NADP(+)-binding site is contributed by G134. Residues 183-328 (TFKEETETDL…RKLREMMFRG (146 aa)) form the KARI C-terminal knotted domain. Residues D191, E195, E227, and E231 each coordinate Mg(2+). S252 lines the substrate pocket.

It belongs to the ketol-acid reductoisomerase family. In terms of assembly, homodimer. It depends on Mg(2+) as a cofactor.

The catalysed reaction is (2R)-2,3-dihydroxy-3-methylbutanoate + NAD(+) = (2S)-2-acetolactate + NADH + H(+). It catalyses the reaction (2R)-2,3-dihydroxy-3-methylbutanoate + NADP(+) = (2S)-2-acetolactate + NADPH + H(+). It participates in amino-acid biosynthesis; L-isoleucine biosynthesis; L-isoleucine from 2-oxobutanoate: step 2/4. Its pathway is amino-acid biosynthesis; L-valine biosynthesis; L-valine from pyruvate: step 2/4. In terms of biological role, involved in the biosynthesis of branched-chain amino acids (BCAA). Catalyzes an alkyl-migration followed by a ketol-acid reduction of (S)-2-acetolactate (S2AL) to yield (R)-2,3-dihydroxy-isovalerate. In the isomerase reaction, S2AL is rearranged via a Mg-dependent methyl migration to produce 3-hydroxy-3-methyl-2-ketobutyrate (HMKB). In the reductase reaction, this 2-ketoacid undergoes a metal-dependent reduction by NADPH or NADH to yield (R)-2,3-dihydroxy-isovalerate. The chain is Ketol-acid reductoisomerase (NAD(P)(+)) from Ignisphaera aggregans (strain DSM 17230 / JCM 13409 / AQ1.S1).